We begin with the raw amino-acid sequence, 330 residues long: Transcription factor TGA2 (330 aa).

Positions 1-48 (MADTSPRTDVSTDDDTDHPDLGSEGALVNTAASDSSDRSKGKMDQKTL) are disordered. Positions 35-47 (SSDRSKGKMDQKT) are enriched in basic and acidic residues. Positions 44-107 (DQKTLRRLAQ…GTGDQAHSTG (64 aa)) constitute a bZIP domain. 2 coiled-coil regions span residues 45–142 (QKTL…HAGD) and 217–244 (INNL…SLAD). The segment at 46–66 (KTLRRLAQNREAARKSRLRKK) is basic motif. Residues 72–86 (LENSRLKLTQLEQEL) are leucine-zipper. Positions 111–327 (ALAFDAEHSR…RALSSLWLAR (217 aa)) constitute a DOG1 domain.

The protein belongs to the bZIP family. In terms of assembly, binds DNA as a dimer. Interacts with NPR1, NPR3 and NPR4. Interacts with GRXC7/ROXY1 and GRXC9/GRX480. Expressed in the whole plant.

It is found in the nucleus. Functionally, transcriptional activator that binds specifically to the DNA sequence 5'-TGACG-3'. Recognizes ocs elements like the as-1 motif of the cauliflower mosaic virus 35S promoter. Binding to the as-1-like cis elements mediate auxin- and salicylic acid-inducible transcription. Required to induce the systemic acquired resistance (SAR) via the regulation of pathogenesis-related genes expression. Binding to the as-1 element of PR-1 promoter is salicylic acid-inducible and mediated by NPR1. Could also bind to the C-boxes (5'-ATGACGTCAT-3') with high affinity. The sequence is that of Transcription factor TGA2 (TGA2) from Arabidopsis thaliana (Mouse-ear cress).